The chain runs to 317 residues: Protein phosphatase 1 regulatory subunit 3C-B (317 aa).

Residues 150 to 258 (RNRLKKNLVC…NNDGKNYKLV (109 aa)) form the CBM21 domain.

As to quaternary structure, interacts with PPP1CC catalytic subunit of PP1 and associates with glycogen. Forms complexes with glycogen phosphorylase, glycogen synthase and phosphorylase kinase which is necessary for its regulation of PP1 activity.

Its function is as follows. Acts as a glycogen-targeting subunit for PP1 and regulates its activity. Activates glycogen synthase, reduces glycogen phosphorylase activity and limits glycogen breakdown. This chain is Protein phosphatase 1 regulatory subunit 3C-B (ppp1r3cb), found in Danio rerio (Zebrafish).